Here is a 616-residue protein sequence, read N- to C-terminus: Electron transfer flavoprotein-ubiquinone oxidoreductase, mitochondrial (616 aa).

The N-terminal 32 residues, 1-32 (MLVRLTKLSCPAYHWFHALKIKKCLPLCAPRC), are a transit peptide targeting the mitochondrion. Residue 70–84 (VVIVGAGPAGLSAAI) coordinates FAD. Position 95 is an N6-acetyllysine (lysine 95). An intramembrane segment occupies 108–129 (IGAHTLSGACLDPAAFKELFPD). Residues lysine 131 and lysine 222 each carry the N6-acetyllysine modification. Residues glycine 304 and glycine 305 each contribute to the a ubiquinone site. An N6-acetyllysine mark is found at lysine 356 and lysine 415. Residues 427 to 446 (TGLHVTEYEDNLKQSWVWKE) lie within the membrane without spanning it. Serine 550 is subject to Phosphoserine. [4Fe-4S] cluster is bound by residues cysteine 560, cysteine 585, cysteine 588, and cysteine 591. One can recognise a 4Fe-4S ferredoxin-type domain in the interval 576–605 (FRLQINAQNCVHCKTCDIKDPSQNINWVVP).

It belongs to the ETF-QO/FixC family. As to quaternary structure, monomer. The cofactor is [4Fe-4S] cluster. Requires FAD as cofactor. Acetylation of Lys-95 and Lys-222 is observed in liver mitochondria from fasted mice but not from fed mice.

The protein resides in the mitochondrion inner membrane. The enzyme catalyses a ubiquinone + reduced [electron-transfer flavoprotein] = a ubiquinol + oxidized [electron-transfer flavoprotein] + H(+). In terms of biological role, accepts electrons from ETF and reduces ubiquinone. The protein is Electron transfer flavoprotein-ubiquinone oxidoreductase, mitochondrial (Etfdh) of Mus musculus (Mouse).